The chain runs to 660 residues: Protein FAM161A (660 aa).

2 coiled-coil regions span residues 93 to 120 (EEYFKKVEELKAAHIETMAKLEKMYQDK) and 296 to 320 (YHDLVKQKEERRRSLKEKSKEALLA). A required for interaction with CFAP418 region spans residues 341 to 525 (QLRDFLKYKK…PTVSSRGREQ (185 aa)). Residues lysine 468 and lysine 484 each participate in a glycyl lysine isopeptide (Lys-Gly) (interchain with G-Cter in SUMO2) cross-link. A coiled-coil region spans residues 522–552 (GREQAVRKSEKERMREYQRELEEREEKLKKR). Residues 605-660 (KSVTEDKESFNEEEKIEERENGEENYFIDTNSQDSYKEKDEANEESEEEKSVEESH) are disordered. A compositionally biased stretch (basic and acidic residues) spans 606–623 (SVTEDKESFNEEEKIEER). Positions 645–660 (EANEESEEEKSVEESH) are enriched in acidic residues.

The protein belongs to the FAM161 family. In terms of assembly, interacts (via central region) with CFAP418 (via N-terminus); the interaction is direct. Interacts (via C-terminus) with microtubules. Interacts with LCA5. Interacts with CEP290. Interacts with SDCCAG8. Interacts with FAM161B. Interacts with POC1B. Interacts with CEP78. Forms a microtubule-associated complex with POC5, CETN2 and POC1B. Interacts with CCDC15. In terms of tissue distribution, isoform 1 and isoform 3 are widely expressed with highest levels in retina and testis, with isoform 1 being the most abundant in all tissues tested.

Its subcellular location is the cytoplasm. The protein resides in the cytoskeleton. It localises to the cilium basal body. It is found in the cell projection. The protein localises to the cilium. Its subcellular location is the microtubule organizing center. The protein resides in the centrosome. It localises to the centriole. Functionally, involved in ciliogenesis. This chain is Protein FAM161A (FAM161A), found in Homo sapiens (Human).